Here is a 146-residue protein sequence, read N- to C-terminus: 3-hydroxyacyl-[acyl-carrier-protein] dehydratase FabZ (146 aa).

Histidine 49 is an active-site residue.

This sequence belongs to the thioester dehydratase family. FabZ subfamily.

It is found in the cytoplasm. The enzyme catalyses a (3R)-hydroxyacyl-[ACP] = a (2E)-enoyl-[ACP] + H2O. Its function is as follows. Involved in unsaturated fatty acids biosynthesis. Catalyzes the dehydration of short chain beta-hydroxyacyl-ACPs and long chain saturated and unsaturated beta-hydroxyacyl-ACPs. In Azotobacter vinelandii (strain DJ / ATCC BAA-1303), this protein is 3-hydroxyacyl-[acyl-carrier-protein] dehydratase FabZ.